Reading from the N-terminus, the 836-residue chain is Pentatricopeptide repeat-containing protein At2g39620 (836 aa).

PPR repeat units lie at residues 1–35 (MPINYTNLLLMLRECKNFRCLLQVHGSLIVSGLKP), 36–62 (HNQLINAYSLFQRQDLSRVIFDSVRDP), 63–98 (GVVLWNSMIRGYTRAGLHREALGFFGYMSEEKGIDP), 99–133 (DKYSFTFALKACAGSMDFKKGLRIHDLIAEMGLES), 134–164 (DVYIGTALVEMYCKARDLVSARQVFDKMHVK), 165–199 (DVVTWNTMVSGLAQNGCSSAALLLFHDMRSCCVDI), 200–230 (DHVSLYNLIPAVSKLEKSDVCRCLHGLVIKK), 233–263 (IFAFSSGLIDMYCNCADLYAAESVFEEVWRK), 264–298 (DESSWGTMMAAYAHNGFFEEVLELFDLMRNYDVRM), 299–333 (NKVAAASALQAAAYVGDLVKGIAIHDYAVQQGLIG), 334–364 (DVSVATSLMSMYSKCGELEIAEQLFINIEDR), 365–399 (DVVSWSAMIASYEQAGQHDEAISLFRDMMRIHIKP), 400–434 (NAVTLTSVLQGCAGVAASRLGKSIHCYAIKADIES), 435–465 (ELETATAVISMYAKCGRFSPALKAFERLPIK), 466–500 (DAVAFNALAQGYTQIGDANKAFDVYKNMKLHGVCP), 501–535 (DSRTMVGMLQTCAFCSDYARGSCVYGQIIKHGFDS), 536–566 (ECHVAHALINMFTKCDALAAAIVLFDKCGFE), 568–602 (STVSWNIMMNGYLLHGQAEEAVATFRQMKVEKFQP), 603–637 (NAVTFVNIVRAAAELSALRVGMSVHSSLIQCGFCS), 638–668 (QTPVGNSLVDMYAKCGMIESSEKCFIEISNK), 669–703 (YIVSWNTMLSAYAAHGLASCAVSLFLSMQENELKP), 704–734 (DSVSFLSVLSACRHAGLVEEGKRIFEEMGER), and 740–770 (EVEHYACMVDLLGKAGLFGEAVEMMRRMRVK). Positions 775 to 836 (VWGALLNSSR…KVPACSWIEV (62 aa)) are type E motif; degenerate.

It belongs to the PPR family. PCMP-E subfamily.

This Arabidopsis thaliana (Mouse-ear cress) protein is Pentatricopeptide repeat-containing protein At2g39620 (PCMP-E33).